Consider the following 507-residue polypeptide: Histidine ammonia-lyase (507 aa).

The 5-imidazolinone (Ala-Gly) cross-link spans 140–142; that stretch reads ASG. At S141 the chain carries 2,3-didehydroalanine (Ser).

Belongs to the PAL/histidase family. Post-translationally, contains an active site 4-methylidene-imidazol-5-one (MIO), which is formed autocatalytically by cyclization and dehydration of residues Ala-Ser-Gly.

Its subcellular location is the cytoplasm. The enzyme catalyses L-histidine = trans-urocanate + NH4(+). It functions in the pathway amino-acid degradation; L-histidine degradation into L-glutamate; N-formimidoyl-L-glutamate from L-histidine: step 1/3. This Yersinia enterocolitica serotype O:8 / biotype 1B (strain NCTC 13174 / 8081) protein is Histidine ammonia-lyase.